The chain runs to 434 residues: GTPase Obg (434 aa).

In terms of domain architecture, Obg spans 1 to 158 (MFLDTAKIKV…RELQLELKIL (158 aa)). Positions 159–336 (ADVGLVGFPS…LLDATAELLD (178 aa)) constitute an OBG-type G domain. GTP contacts are provided by residues 165–172 (GFPSVGKS), 190–194 (FTTIV), 212–215 (DLPG), 282–285 (NKMD), and 317–319 (SGL). 2 residues coordinate Mg(2+): Ser-172 and Thr-192. The region spanning 356–434 (GFDEEEKAFE…IGKFEFEFVD (79 aa)) is the OCT domain.

It belongs to the TRAFAC class OBG-HflX-like GTPase superfamily. OBG GTPase family. Monomer. Mg(2+) serves as cofactor.

It localises to the cytoplasm. Functionally, an essential GTPase which binds GTP, GDP and possibly (p)ppGpp with moderate affinity, with high nucleotide exchange rates and a fairly low GTP hydrolysis rate. Plays a role in control of the cell cycle, stress response, ribosome biogenesis and in those bacteria that undergo differentiation, in morphogenesis control. This chain is GTPase Obg, found in Streptococcus pneumoniae (strain ATCC 700669 / Spain 23F-1).